The primary structure comprises 354 residues: Protein RecA (354 aa).

Residue 65 to 72 participates in ATP binding; sequence GPESSGKT.

It belongs to the RecA family.

The protein localises to the cytoplasm. Can catalyze the hydrolysis of ATP in the presence of single-stranded DNA, the ATP-dependent uptake of single-stranded DNA by duplex DNA, and the ATP-dependent hybridization of homologous single-stranded DNAs. It interacts with LexA causing its activation and leading to its autocatalytic cleavage. The sequence is that of Protein RecA from Pseudomonas syringae pv. syringae (strain B728a).